A 358-amino-acid polypeptide reads, in one-letter code: MSAKTILSSVVLVVLVAASAAANIGFDESNPIRMVSDGLREVEESVSQILGQSRHVLSFARFTHRYGKKYQNVEEMKLRFSIFKENLDLIRSTNKKGLSYKLGVNQFADLTWQEFQRTKLGAAQNCSATLKGSHKVTEAALPETKDWREDGIVSPVKDQGGCGSCWTFSTTGALEAAYHQAFGKGISLSEQQLVDCAGAFNNYGCNGGLPSQAFEYIKSNGGLDTEKAYPYTGKDETCKFSAENVGVQVLNSVNITLGAEDELKHAVGLVRPVSIAFEVIHSFRLYKSGVYTDSHCGSTPMDVNHAVLAVGYGVEDGVPYWLIKNSWGADWGDKGYFKMEMGKNMCGIATCASYPVVA.

The signal sequence occupies residues 1–21 (MSAKTILSSVVLVVLVAASAA). The interval 22–42 (ANIGFDESNPIRMVSDGLREV) is interaction with VSR1. The propeptide at 22-140 (ANIGFDESNP…KGSHKVTEAA (119 aa)) is activation peptide. N-linked (GlcNAc...) asparagine glycosylation is present at N125. 2 disulfide bridges follow: C162–C205 and C196–C238. Residue C165 is part of the active site. N-linked (GlcNAc...) asparagine glycosylation is present at N254. C296 and C346 are joined by a disulfide. Active-site residues include H305 and N325.

This sequence belongs to the peptidase C1 family. Interacts with VSR1/BP80B. In terms of tissue distribution, expressed in leaves (at protein level).

It is found in the vacuole. The catalysed reaction is Hydrolysis of proteins, acting as an aminopeptidase (notably, cleaving Arg-|-Xaa bonds) as well as an endopeptidase.. Functionally, may play a role in proteolysis leading to mobilization of nitrogen during senescence and starvation. This Arabidopsis thaliana (Mouse-ear cress) protein is Thiol protease aleurain.